The sequence spans 487 residues: Betaine aldehyde dehydrogenase (487 aa).

2 residues coordinate K(+): S26 and D93. 150 to 152 (GAW) contributes to the NAD(+) binding site. The active-site Charge relay system is the K162. Residues 176–179 (KPSE) and 229–232 (SVPT) contribute to the NAD(+) site. L244 is a binding site for K(+). The active-site Proton acceptor is the E250. NAD(+) is bound by residues G252, C284, and E384. The Nucleophile role is filled by C284. C284 is subject to Cysteine sulfenic acid (-SOH). K454 and G457 together coordinate K(+). E461 (charge relay system) is an active-site residue.

The protein belongs to the aldehyde dehydrogenase family. As to quaternary structure, dimer of dimers. K(+) is required as a cofactor.

It carries out the reaction betaine aldehyde + NAD(+) + H2O = glycine betaine + NADH + 2 H(+). Its pathway is amine and polyamine biosynthesis; betaine biosynthesis via choline pathway; betaine from betaine aldehyde: step 1/1. Involved in the biosynthesis of the osmoprotectant glycine betaine. Catalyzes the irreversible oxidation of betaine aldehyde to the corresponding acid. This chain is Betaine aldehyde dehydrogenase, found in Rhizobium leguminosarum bv. trifolii (strain WSM2304).